Here is an 812-residue protein sequence, read N- to C-terminus: Valine--tRNA ligase (812 aa).

The 'HIGH' region signature appears at 46-56; it reads PTVSGQLHIGH. Positions 536 to 540 match the 'KMSKS' region motif; that stretch reads KMSKS. An ATP-binding site is contributed by Lys539.

Belongs to the class-I aminoacyl-tRNA synthetase family. ValS type 2 subfamily. In terms of assembly, monomer.

Its subcellular location is the cytoplasm. The enzyme catalyses tRNA(Val) + L-valine + ATP = L-valyl-tRNA(Val) + AMP + diphosphate. In terms of biological role, catalyzes the attachment of valine to tRNA(Val). As ValRS can inadvertently accommodate and process structurally similar amino acids such as threonine, to avoid such errors, it has a 'posttransfer' editing activity that hydrolyzes mischarged Thr-tRNA(Val) in a tRNA-dependent manner. The protein is Valine--tRNA ligase of Rickettsia rickettsii (strain Iowa).